Here is an 88-residue protein sequence, read N- to C-terminus: Molybdopterin synthase sulfur carrier subunit (88 aa).

The residue at position 88 (glycine 88) is a 1-thioglycine; alternate. Glycine 88 is modified (glycyl adenylate; alternate).

This sequence belongs to the MoaD family. MOCS2A subfamily. In terms of assembly, heterotetramer; composed of 2 small (MOCS2A) and 2 large (MOCS2B) subunits. Post-translationally, C-terminal thiocarboxylation occurs in 2 steps, it is first acyl-adenylated (-COAMP) via the hesA/moeB/thiF part of uba4, then thiocarboxylated (-COSH) via the rhodanese domain of uba4.

Its subcellular location is the cytoplasm. It functions in the pathway cofactor biosynthesis; molybdopterin biosynthesis. Its function is as follows. Acts as a sulfur carrier required for molybdopterin biosynthesis. Component of the molybdopterin synthase complex that catalyzes the conversion of precursor Z into molybdopterin by mediating the incorporation of 2 sulfur atoms into precursor Z to generate a dithiolene group. In the complex, serves as sulfur donor by being thiocarboxylated (-COSH) at its C-terminus by uba4. After interaction with MOCS2B, the sulfur is then transferred to precursor Z to form molybdopterin. The protein is Molybdopterin synthase sulfur carrier subunit of Aspergillus niger (strain ATCC MYA-4892 / CBS 513.88 / FGSC A1513).